We begin with the raw amino-acid sequence, 207 residues long: Recombination protein RecR (207 aa).

The segment at 60-75 (CRRCHNISDSGVCTIC) adopts a C4-type zinc-finger fold. Residues 83–178 (STLCVVENIR…RVSVIARGIA (96 aa)) enclose the Toprim domain.

Belongs to the RecR family.

In terms of biological role, may play a role in DNA repair. It seems to be involved in an RecBC-independent recombinational process of DNA repair. It may act with RecF and RecO. The sequence is that of Recombination protein RecR from Porphyromonas gingivalis (strain ATCC 33277 / DSM 20709 / CIP 103683 / JCM 12257 / NCTC 11834 / 2561).